A 485-amino-acid polypeptide reads, in one-letter code: Glutamyl-tRNA(Gln) amidotransferase subunit A (485 aa).

Active-site charge relay system residues include lysine 79 and serine 154. Serine 178 (acyl-ester intermediate) is an active-site residue.

Belongs to the amidase family. GatA subfamily. Heterotrimer of A, B and C subunits.

It carries out the reaction L-glutamyl-tRNA(Gln) + L-glutamine + ATP + H2O = L-glutaminyl-tRNA(Gln) + L-glutamate + ADP + phosphate + H(+). In terms of biological role, allows the formation of correctly charged Gln-tRNA(Gln) through the transamidation of misacylated Glu-tRNA(Gln) in organisms which lack glutaminyl-tRNA synthetase. The reaction takes place in the presence of glutamine and ATP through an activated gamma-phospho-Glu-tRNA(Gln). In Bacillus licheniformis (strain ATCC 14580 / DSM 13 / JCM 2505 / CCUG 7422 / NBRC 12200 / NCIMB 9375 / NCTC 10341 / NRRL NRS-1264 / Gibson 46), this protein is Glutamyl-tRNA(Gln) amidotransferase subunit A.